The sequence spans 468 residues: DNA methyltransferase 1-associated protein 1 (468 aa).

Composition is skewed to basic and acidic residues over residues M1–L11 and S26–K48. The interval M1–K48 is disordered. K27 is covalently cross-linked (Glycyl lysine isopeptide (Lys-Gly) (interchain with G-Cter in SUMO2)). In terms of domain architecture, SANT spans D149 to C199. K214 is covalently cross-linked (Glycyl lysine isopeptide (Lys-Gly) (interchain with G-Cter in SUMO2)). Residues R225 to A275 adopt a coiled-coil conformation. Residues K258–D267 are compositionally biased toward basic and acidic residues. Disordered regions lie at residues K258–P305 and A411–P468. Residue T446 is modified to Phosphothreonine. The residue at position 449 (S449) is a Phosphoserine.

As to quaternary structure, component of the NuA4 histone acetyltransferase complex which contains the catalytic subunit KAT5/TIP60 and the subunits EP400, TRRAP/PAF400, BRD8/SMAP, EPC1, DMAP1/DNMAP1, RUVBL1/TIP49, RUVBL2, ING3, actin, ACTL6A/BAF53A, MORF4L1/MRG15, MORF4L2/MRGX, MRGBP, YEATS4/GAS41, VPS72/YL1 and MEAF6. Component of a NuA4-related complex which contains EP400, TRRAP/PAF400, SRCAP, BRD8/SMAP, EPC1, DMAP1/DNMAP1, RUVBL1/TIP49, RUVBL2, actin, ACTL6A/BAF53A, VPS72 and YEATS4/GAS41. DMAP1 also forms a complex with DNMT1 and HDAC2. Throughout S phase it interacts directly with the N-terminus of DNMT1, which serves to recruit DMAP1 to replication foci. DMAP1 interacts with ING1, a component of the mSIN3A transcription repressor complex, although this interaction is not required for recruitment of ING1 to heterochromatin. Interacts directly with the transcriptional corepressor TSG101. Interacts with URI1. Interacts with the pro-apoptotic protein DAXX.

It is found in the nucleus. The protein resides in the cytoplasm. Involved in transcription repression and activation. Its interaction with HDAC2 may provide a mechanism for histone deacetylation in heterochromatin following replication of DNA at late firing origins. Can also repress transcription independently of histone deacetylase activity. May specifically potentiate DAXX-mediated repression of glucocorticoid receptor-dependent transcription. Component of the NuA4 histone acetyltransferase (HAT) complex which is involved in transcriptional activation of select genes principally by acetylation of nucleosomal histones H4 and H2A. This modification may both alter nucleosome - DNA interactions and promote interaction of the modified histones with other proteins which positively regulate transcription. This complex may be required for the activation of transcriptional programs associated with oncogene and proto-oncogene mediated growth induction, tumor suppressor mediated growth arrest and replicative senescence, apoptosis, and DNA repair. NuA4 may also play a direct role in DNA repair when recruited to sites of DNA damage. Participates in the nuclear localization of URI1 and increases its transcriptional corepressor activity. The chain is DNA methyltransferase 1-associated protein 1 (Dmap1) from Mus musculus (Mouse).